The chain runs to 575 residues: Probable methionine--tRNA ligase, mitochondrial (575 aa).

Positions 52-62 match the 'HIGH' region motif; the sequence is FYVNGPPHIGH. A 'KMSKS' region motif is present at residues 352–356; the sequence is KMSKS. An ATP-binding site is contributed by Lys-355.

This sequence belongs to the class-I aminoacyl-tRNA synthetase family.

It localises to the mitochondrion matrix. The enzyme catalyses tRNA(Met) + L-methionine + ATP = L-methionyl-tRNA(Met) + AMP + diphosphate. In Dictyostelium discoideum (Social amoeba), this protein is Probable methionine--tRNA ligase, mitochondrial (mmetS).